Here is a 193-residue protein sequence, read N- to C-terminus: 3-isopropylmalate dehydratase small subunit (193 aa).

It belongs to the LeuD family. LeuD type 1 subfamily. In terms of assembly, heterodimer of LeuC and LeuD.

It catalyses the reaction (2R,3S)-3-isopropylmalate = (2S)-2-isopropylmalate. The protein operates within amino-acid biosynthesis; L-leucine biosynthesis; L-leucine from 3-methyl-2-oxobutanoate: step 2/4. In terms of biological role, catalyzes the isomerization between 2-isopropylmalate and 3-isopropylmalate, via the formation of 2-isopropylmaleate. This is 3-isopropylmalate dehydratase small subunit from Bacillus cereus (strain 03BB102).